The sequence spans 228 residues: MKAAVISFPGSNCDLDLQWAVRDIAGAECDLIKPTQTDLTAYDVVMVPGGFSYGDYLRSGAIARFSPVMDALKQFAAAGGYVIGICNGFQILTEAGFLPGALQWNRDLNFICEPVALTVENAGTAFSNQYQVGDHLTLPIAHGEGNYYADPETLAALETNGQVVFRYANNPNGSMHDIAGVTNETGNVLGMMPHPERAVEALLGGTDGLGVFQSLINQTEGADVRGAR.

The Glutamine amidotransferase type-1 domain occupies lysine 2–arginine 225. The Nucleophile role is filled by cysteine 86. Catalysis depends on residues histidine 194 and glutamate 196.

As to quaternary structure, part of the FGAM synthase complex composed of 1 PurL, 1 PurQ and 2 PurS subunits.

It localises to the cytoplasm. It catalyses the reaction N(2)-formyl-N(1)-(5-phospho-beta-D-ribosyl)glycinamide + L-glutamine + ATP + H2O = 2-formamido-N(1)-(5-O-phospho-beta-D-ribosyl)acetamidine + L-glutamate + ADP + phosphate + H(+). It carries out the reaction L-glutamine + H2O = L-glutamate + NH4(+). It functions in the pathway purine metabolism; IMP biosynthesis via de novo pathway; 5-amino-1-(5-phospho-D-ribosyl)imidazole from N(2)-formyl-N(1)-(5-phospho-D-ribosyl)glycinamide: step 1/2. In terms of biological role, part of the phosphoribosylformylglycinamidine synthase complex involved in the purines biosynthetic pathway. Catalyzes the ATP-dependent conversion of formylglycinamide ribonucleotide (FGAR) and glutamine to yield formylglycinamidine ribonucleotide (FGAM) and glutamate. The FGAM synthase complex is composed of three subunits. PurQ produces an ammonia molecule by converting glutamine to glutamate. PurL transfers the ammonia molecule to FGAR to form FGAM in an ATP-dependent manner. PurS interacts with PurQ and PurL and is thought to assist in the transfer of the ammonia molecule from PurQ to PurL. The protein is Phosphoribosylformylglycinamidine synthase subunit PurQ of Lacticaseibacillus casei (strain BL23) (Lactobacillus casei).